Reading from the N-terminus, the 914-residue chain is Thyroid peroxidase (914 aa).

The N-terminal stretch at 1 to 31 (MRTLGAMAIMLVVMGTVIFLSFILRSRDILC) is a signal peptide. Over 32–834 (GKTMKSHVIS…TCIDSGRLPR (803 aa)) the chain is Extracellular. Residue N123 is glycosylated (N-linked (GlcNAc...) asparagine). C136 and C152 are joined by a disulfide. D232 provides a ligand contact to heme b. H233 (proton acceptor) is an active-site residue. D234 lines the Ca(2+) pocket. 2 cysteine pairs are disulfide-bonded: C253-C263 and C257-C278. 2 N-linked (GlcNAc...) asparagine glycosylation sites follow: N271 and N299. Ca(2+) contacts are provided by T313, F315, D317, and S319. Residue N334 is glycosylated (N-linked (GlcNAc...) asparagine). Residues E387 and H482 each contribute to the heme b site. 7 disulfide bridges follow: C586–C643, C684–C709, C730–C770, C756–C782, C788–C802, C796–C811, and C813–C826. N603 carries an N-linked (GlcNAc...) asparagine glycan. Positions 728 to 783 (DKCVFPEEVDNGNFVHCEESGKLVLVYSCFHGYKLQGQEQVTCTQKGWDSEPPVCK) constitute a Sushi domain. One can recognise an EGF-like; calcium-binding domain in the interval 784-827 (DVNECADLTHPPCHPSAQCKNTKGSFQCVCTDPYVLGEDEKTCI). A helical transmembrane segment spans residues 835–859 (ASWVSIALGALLIGGLASLTWIVIC). At 860-914 (RWTHADKKATLPITERVTTQSGCRKSQGRGISPHKAAAQDTGQEPASGSRVLLCE) the chain is on the cytoplasmic side. Positions 881 to 909 (GCRKSQGRGISPHKAAAQDTGQEPASGSR) are disordered.

This sequence belongs to the peroxidase family. XPO subfamily. As to quaternary structure, interacts with DUOX1, DUOX2 and CYBA. Ca(2+) is required as a cofactor. Heme b serves as cofactor. In terms of processing, heme is covalently bound through a H(2)O(2)-dependent autocatalytic process. Heme insertion is important for the delivery of protein at the cell surface. Cleaved in its N-terminal part.

It localises to the membrane. The enzyme catalyses 2 iodide + H2O2 + 2 H(+) = diiodine + 2 H2O. It catalyses the reaction [thyroglobulin]-L-tyrosine + iodide + H2O2 + H(+) = [thyroglobulin]-3-iodo-L-tyrosine + 2 H2O. The catalysed reaction is [thyroglobulin]-3-iodo-L-tyrosine + iodide + H2O2 + H(+) = [thyroglobulin]-3,5-diiodo-L-tyrosine + 2 H2O. It carries out the reaction 2 [thyroglobulin]-3,5-diiodo-L-tyrosine + H2O2 = [thyroglobulin]-L-thyroxine + [thyroglobulin]-dehydroalanine + 2 H2O. The enzyme catalyses [thyroglobulin]-3-iodo-L-tyrosine + [thyroglobulin]-3,5-diiodo-L-tyrosine + H2O2 = [thyroglobulin]-3,3',5-triiodo-L-thyronine + [thyroglobulin]-dehydroalanine + 2 H2O. It functions in the pathway hormone biosynthesis; thyroid hormone biosynthesis. Iodination and coupling of the hormonogenic tyrosines in thyroglobulin to yield the thyroid hormones T(3) and T(4). This chain is Thyroid peroxidase (Tpo), found in Mus musculus (Mouse).